The following is a 62-amino-acid chain: uncharacterized protein (62 aa).

Positions 28-61 form a coiled coil; the sequence is KIESTHPEIAKKLKEAAEKYREVEEILKKAVDMV.

This is an uncharacterized protein from Archaeoglobus fulgidus (strain ATCC 49558 / DSM 4304 / JCM 9628 / NBRC 100126 / VC-16).